The chain runs to 116 residues: U30-theraphotoxin-Cg1a (116 aa).

The signal sequence occupies residues 1 to 17 (MKLCVLTIASLLVTVTS). A propeptide spanning residues 18-53 (LETQKEIAEGSELTREETPSLVEHKEDEAAAASEKR) is cleaved from the precursor. Residues 24–46 (IAEGSELTREETPSLVEHKEDEA) are disordered. 4 cysteine pairs are disulfide-bonded: Cys55/Cys69, Cys62/Cys75, Cys66/Cys112, and Cys68/Cys88.

It belongs to the neurotoxin 03 (Tx2) family. 02 subfamily. HNTX-XV sub-subfamily. Expressed by the venom gland.

The protein localises to the secreted. In terms of biological role, probable ion channel inhibitor. In Chilobrachys guangxiensis (Chinese earth tiger tarantula), this protein is U30-theraphotoxin-Cg1a.